Here is a 931-residue protein sequence, read N- to C-terminus: Mitochondrial cox1 translation regulator ppr4 (931 aa).

Residues Met1 to Phe16 constitute a mitochondrion transit peptide. 7 PPR repeats span residues Asn247–Thr277, Ser282–Ile316, His429–Val461, Asp462–Thr496, Ser497–Glu531, Asn598–Pro632, and Pro683–Tyr713.

Component of the MRH5C complex, composed of mrh5, ppr4, mtf2, and sls1. Proteins mtf2 and sls1 form a subcomplex that serves as a scaffold to bring mrh5 and ppr4 together. The MRH5C complex associates with the small subunit of the mitochondrial ribosome.

It localises to the mitochondrion. RNA-binding translation activation factor that as part of the MRH5C complex specifically recruits cox1 mRNA to the mitochondrial ribosome for translation initiation. The sequence is that of Mitochondrial cox1 translation regulator ppr4 from Schizosaccharomyces pombe (strain 972 / ATCC 24843) (Fission yeast).